The chain runs to 89 residues: Small ribosomal subunit protein uS15 (89 aa).

This sequence belongs to the universal ribosomal protein uS15 family. In terms of assembly, part of the 30S ribosomal subunit. Forms a bridge to the 50S subunit in the 70S ribosome, contacting the 23S rRNA.

Functionally, one of the primary rRNA binding proteins, it binds directly to 16S rRNA where it helps nucleate assembly of the platform of the 30S subunit by binding and bridging several RNA helices of the 16S rRNA. In terms of biological role, forms an intersubunit bridge (bridge B4) with the 23S rRNA of the 50S subunit in the ribosome. This is Small ribosomal subunit protein uS15 from Bifidobacterium animalis subsp. lactis (strain AD011).